A 322-amino-acid chain; its full sequence is Acetyl-coenzyme A carboxylase carboxyl transferase subunit alpha (322 aa).

The region spanning 39–296 is the CoA carboxyltransferase C-terminal domain; the sequence is DLTALKKQLI…HSKLVTELNY (258 aa).

It belongs to the AccA family. In terms of assembly, acetyl-CoA carboxylase is a heterohexamer composed of biotin carboxyl carrier protein (accB), biotin carboxylase (accC) and two subunits each of ACCase subunit alpha (accA) and ACCase subunit beta (accD).

The protein localises to the plastid. It is found in the chloroplast. It catalyses the reaction N(6)-carboxybiotinyl-L-lysyl-[protein] + acetyl-CoA = N(6)-biotinyl-L-lysyl-[protein] + malonyl-CoA. It participates in lipid metabolism; malonyl-CoA biosynthesis; malonyl-CoA from acetyl-CoA: step 1/1. Functionally, component of the acetyl coenzyme A carboxylase (ACC) complex. First, biotin carboxylase catalyzes the carboxylation of biotin on its carrier protein (BCCP) and then the CO(2) group is transferred by the carboxyltransferase to acetyl-CoA to form malonyl-CoA. This is Acetyl-coenzyme A carboxylase carboxyl transferase subunit alpha from Antithamnion sp. (Red alga).